We begin with the raw amino-acid sequence, 990 residues long: Bifunctional glutamine synthetase adenylyltransferase/adenylyl-removing enzyme (990 aa).

Positions 1–474 are adenylyl removase; sequence MIFSAITADL…HYAKLFEGDP (474 aa). The tract at residues 478 to 990 is adenylyl transferase; it reads AKLPPVDYGA…FSRLIGGEDA (513 aa).

This sequence belongs to the GlnE family. It depends on Mg(2+) as a cofactor.

The catalysed reaction is [glutamine synthetase]-O(4)-(5'-adenylyl)-L-tyrosine + phosphate = [glutamine synthetase]-L-tyrosine + ADP. It carries out the reaction [glutamine synthetase]-L-tyrosine + ATP = [glutamine synthetase]-O(4)-(5'-adenylyl)-L-tyrosine + diphosphate. Its function is as follows. Involved in the regulation of glutamine synthetase GlnA, a key enzyme in the process to assimilate ammonia. When cellular nitrogen levels are high, the C-terminal adenylyl transferase (AT) inactivates GlnA by covalent transfer of an adenylyl group from ATP to specific tyrosine residue of GlnA, thus reducing its activity. Conversely, when nitrogen levels are low, the N-terminal adenylyl removase (AR) activates GlnA by removing the adenylyl group by phosphorolysis, increasing its activity. The regulatory region of GlnE binds the signal transduction protein PII (GlnB) which indicates the nitrogen status of the cell. The protein is Bifunctional glutamine synthetase adenylyltransferase/adenylyl-removing enzyme of Rhodopseudomonas palustris (strain ATCC BAA-98 / CGA009).